Consider the following 888-residue polypeptide: Collagen alpha chain (888 aa).

Residues 1–627 (APGPDGLTGT…GPPGQPGMSE (627 aa)) form a disordered region. A Collagen-like 1 domain is found at 3-60 (GPDGLTGTKGSMGEPGTDGEPGSPGPQGAKGETGLAGRRGLTGIPGKQGRQGERGEPG). Low complexity-rich tracts occupy residues 59–73 (PGTAGSQGQQGQPGT) and 148–164 (TPGLPGMPGQQGPMGPI). Positions 179–190 (RGYDGKDGEPGR) are enriched in basic and acidic residues. The segment covering 194–203 (PGPIGQPGIP) has biased composition (low complexity). A compositionally biased stretch (pro residues) spans 311–320 (SGPPGPPGPS). Positions 422 to 440 (SGSRGAQGPPGAPGSSGQN) are enriched in low complexity. Residues 441–450 (GVDGGTGENG) are compositionally biased toward gly residues. Low complexity-rich tracts occupy residues 460 to 475 (ESGAPGDPGASGSAGP) and 508 to 518 (EPGPQGDQGPK). The Collagen-like 2 domain occupies 513-571 (GDQGPKGQKGEVGPVGEKGDKGWTGTPGDPGPQGDRGEPGPPGRDGVDGPPGPRGAPGE). Residues 610–622 (PPGPPGPPGPPGQ) show a composition bias toward pro residues. A Fibrillar collagen NC1 domain is found at 661 to 884 (ENVLKDLDEK…KLEIGPACFH (224 aa)). 2 disulfide bridges follow: Cys-731–Cys-882 and Cys-793–Cys-833.

The protein belongs to the fibrillar collagen family. As to expression, component of the acid-insoluble organic matrix of the aragonitic skeleton (at protein level).

The protein resides in the secreted. The protein is Collagen alpha chain of Acropora millepora (Staghorn coral).